We begin with the raw amino-acid sequence, 737 residues long: tRNA-dihydrouridine(47) synthase [NAD(P)(+)] (737 aa).

Composition is skewed to basic and acidic residues over residues 1–11 (MESQETAKRPI) and 24–33 (PATKRVKLDD). The disordered stretch occupies residues 1–127 (MESQETAKRP…GKKKRPKGQN (127 aa)). The span at 35–44 (PVPQIQEEPS) shows a compositional bias: low complexity. Residues 57-82 (EDEKPTEQRQDDRDKRRGIAPIKKEY) show a composition bias toward basic and acidic residues. 2 consecutive C3H1-type zinc fingers follow at residues 142-166 (CNSV…NALH) and 187-208 (CPVW…VESH). Residues 332-334 (PLT) and Gln407 contribute to the FMN site. Residue Cys439 is the Proton donor of the active site. FMN contacts are provided by residues Lys479, His520, 577–579 (NGD), and 601–602 (GR).

Belongs to the Dus family. Dus3 subfamily. It depends on FMN as a cofactor.

Its subcellular location is the cytoplasm. It localises to the nucleus. The enzyme catalyses 5,6-dihydrouridine(47) in tRNA + NAD(+) = uridine(47) in tRNA + NADH + H(+). It carries out the reaction 5,6-dihydrouridine(47) in tRNA + NADP(+) = uridine(47) in tRNA + NADPH + H(+). It catalyses the reaction a 5,6-dihydrouridine in mRNA + NAD(+) = a uridine in mRNA + NADH + H(+). The catalysed reaction is a 5,6-dihydrouridine in mRNA + NADP(+) = a uridine in mRNA + NADPH + H(+). Catalyzes the synthesis of dihydrouridine, a modified base found in the D-loop of most tRNAs. Specifically modifies U47 in cytoplasmic tRNAs. Catalyzes the synthesis of dihydrouridine in some mRNAs, thereby affecting their translation. This is tRNA-dihydrouridine(47) synthase [NAD(P)(+)] (dus-3) from Neurospora crassa (strain ATCC 24698 / 74-OR23-1A / CBS 708.71 / DSM 1257 / FGSC 987).